The following is a 315-amino-acid chain: MSQSLRIVFAGTPDFAARHLAALLSSEHEVIAVYTNPDRPAGRGKKLAAPPVKQLALEHNIPVYQPESFKSDEAKQELADLNADLMVVVAYGMLLPQAVLDTPKLGCINVHGSILPRWRGAAPIQRSIWAGDAETGVTIMQMDIGLDTGDMLKIATLPIEATDTSASMYEKLAELGPEALIDCLADIAAGKAVPVKQDDELANYAKKLNKEEARINWNDDAAHIERCVRAFNPWPMSHFEAAENSIKVWQSRVAEQTSDKPAGTIVQADKTGIYVATGNGVLVLEQLQVPGKKAMSVQDILNSRAAWFEVGTLLV.

Residue 113–116 (SILP) coordinates (6S)-5,6,7,8-tetrahydrofolate.

The protein belongs to the Fmt family.

The enzyme catalyses L-methionyl-tRNA(fMet) + (6R)-10-formyltetrahydrofolate = N-formyl-L-methionyl-tRNA(fMet) + (6S)-5,6,7,8-tetrahydrofolate + H(+). Its function is as follows. Attaches a formyl group to the free amino group of methionyl-tRNA(fMet). The formyl group appears to play a dual role in the initiator identity of N-formylmethionyl-tRNA by promoting its recognition by IF2 and preventing the misappropriation of this tRNA by the elongation apparatus. This is Methionyl-tRNA formyltransferase from Vibrio parahaemolyticus serotype O3:K6 (strain RIMD 2210633).